The following is a 363-amino-acid chain: DNA replication and repair protein RecF (363 aa).

Position 30–37 (30–37) interacts with ATP; that stretch reads GSNGSGKT.

This sequence belongs to the RecF family.

The protein localises to the cytoplasm. In terms of biological role, the RecF protein is involved in DNA metabolism; it is required for DNA replication and normal SOS inducibility. RecF binds preferentially to single-stranded, linear DNA. It also seems to bind ATP. This chain is DNA replication and repair protein RecF, found in Photorhabdus laumondii subsp. laumondii (strain DSM 15139 / CIP 105565 / TT01) (Photorhabdus luminescens subsp. laumondii).